A 425-amino-acid chain; its full sequence is MQAYFDQLDRVRYEGPQSTNPLAFRHYNPDELVLGKRMEDHLRFAACYWHTFCWNGADMFGVGAFNRPWQQPGEALELAKRKADVAFEFFHKLNVPFYCFHDVDVSPEGASLKEYKNNFAQMVDVLAAKQEQSGVKLLWGTANCFTNPRYGAGAATNPDPEVFSCAATQVVTAMNATHKLGGENYVLWGGREGYETLLNTDLRQEREQIGRFMQMVVEHKHKMGFQGTLLIEPKPQEPTKHQYDYDVATVYGFLKQFGLEKEIKVNIEANHATLAGHSFHHEIATAIALGIFGSVDANRGDAQLGWDTDQFPISVEENALVMYEILKAGGFTTGGLNFDAKVRRQSTDKYDLFYGHIGAMDTMALSLKIAARMVEDGELGQQILKGQLSLGKLAQYAEQHHLAPVHQSGHQELLENLVNRYLFDK.

Catalysis depends on residues His-101 and Asp-104. Mg(2+) is bound by residues Glu-232, Glu-268, His-271, Asp-296, Asp-307, Asp-309, and Asp-339.

The protein belongs to the xylose isomerase family. Homotetramer. It depends on Mg(2+) as a cofactor.

The protein resides in the cytoplasm. It carries out the reaction alpha-D-xylose = alpha-D-xylulofuranose. In Salmonella paratyphi A (strain ATCC 9150 / SARB42), this protein is Xylose isomerase.